The chain runs to 428 residues: Serine--tRNA ligase (428 aa).

L-serine is bound at residue 231-233; it reads TAE. 262 to 264 contributes to the ATP binding site; it reads RSE. Glu285 contacts L-serine. 349–352 contacts ATP; it reads EISS. Residue Ser385 coordinates L-serine.

Belongs to the class-II aminoacyl-tRNA synthetase family. Type-1 seryl-tRNA synthetase subfamily. In terms of assembly, homodimer. The tRNA molecule binds across the dimer.

It is found in the cytoplasm. It carries out the reaction tRNA(Ser) + L-serine + ATP = L-seryl-tRNA(Ser) + AMP + diphosphate + H(+). The enzyme catalyses tRNA(Sec) + L-serine + ATP = L-seryl-tRNA(Sec) + AMP + diphosphate + H(+). It functions in the pathway aminoacyl-tRNA biosynthesis; selenocysteinyl-tRNA(Sec) biosynthesis; L-seryl-tRNA(Sec) from L-serine and tRNA(Sec): step 1/1. Catalyzes the attachment of serine to tRNA(Ser). Is also able to aminoacylate tRNA(Sec) with serine, to form the misacylated tRNA L-seryl-tRNA(Sec), which will be further converted into selenocysteinyl-tRNA(Sec). The sequence is that of Serine--tRNA ligase from Cellvibrio japonicus (strain Ueda107) (Pseudomonas fluorescens subsp. cellulosa).